The primary structure comprises 1272 residues: AF4/FMR2 family member 2 (1272 aa).

Disordered stretches follow at residues 151-190 (SNRKSKSEWPRDSHNTSPAQASQTSSQPNKMQTSTQDPPQ), 204-231 (PQIGTVEKSNPSSKEENNPNSGGEDTFK), 372-401 (TLQKWSDPSSRASTKMLEDDLKLSSDEDDL), 422-497 (KAKP…QLDK), 557-694 (IREK…ETLQ), 715-743 (TLSTLTNGNSNNLSTSNEETAFSPPPAMQ), and 772-899 (PGQN…QDKN). Basic and acidic residues predominate over residues 155–164 (SKSEWPRDSH). Residues 165–179 (NTSPAQASQTSSQPN) are compositionally biased toward low complexity. Residues 180–189 (KMQTSTQDPP) show a composition bias toward polar residues. Residues 210–227 (EKSNPSSKEENNPNSGGE) are compositionally biased toward low complexity. Over residues 374–384 (QKWSDPSSRAS) the composition is skewed to polar residues. Over residues 387 to 396 (MLEDDLKLSS) the composition is skewed to basic and acidic residues. The residue at position 395 (serine 395) is a Phosphoserine. Residues 436 to 450 (TPQSTPATQTNVGSG) are compositionally biased toward polar residues. Threonine 482 bears the Phosphothreonine mark. Positions 580-590 (STSVDTVSQRT) are enriched in polar residues. The segment covering 620 to 633 (PKEKGSVELPDPPR) has biased composition (basic and acidic residues). Basic residues predominate over residues 634–644 (SRNKATAHKPV). Low complexity predominate over residues 715–734 (TLSTLTNGNSNNLSTSNEET). Basic and acidic residues predominate over residues 815–831 (PAETAEKIPEKKQRLED). The segment covering 841 to 850 (CISPAPPHKP) has biased composition (pro residues). A compositionally biased stretch (polar residues) spans 887 to 899 (VSGNNGHFGQDKN).

Belongs to the AF4 family. In terms of tissue distribution, highly expressed in the hippocampus, the piriform cortex, Purkinje cells and the cingulate gyrus.

The protein localises to the nucleus speckle. RNA-binding protein. Might be involved in alternative splicing regulation through an interaction with G-quartet RNA structure. The protein is AF4/FMR2 family member 2 of Mus musculus (Mouse).